The following is a 186-amino-acid chain: uncharacterized protein (186 aa).

The next 3 helical transmembrane spans lie at 43-63 (GAWV…HAIP), 69-89 (LAWT…FHWV), and 143-163 (WMFL…LPAV).

Its subcellular location is the endoplasmic reticulum membrane. This is an uncharacterized protein from Schizosaccharomyces pombe (strain 972 / ATCC 24843) (Fission yeast).